The sequence spans 631 residues: MDYDYEKLGLKVGLEIHQQLNTKRKLFCNCPTKIRDDEPHGEIERVLRPSQSEMGHVDKAALLESKKEKKFIYQYYNDTTCLVELDDEPPHDVAPEAVDTALEVSTLMNMKMADEVQIMRKMVIDGSNTSGFQRTMFVSQEGFIETEYGNIGVTSLCLEEDACKKIEDGKDYTKYCVDRLGIPLLEITTEPDITSPKMGKEAARRIGTILRATGKVKRGLGTIRQDVNISIKNGARIEVKGVQNLDLIEKIIENEVTRQISLNEIKEELLKRNAEVVDEIKDITELLKDTESKVLKNALKNKGVIRAILLKGFSGMIGREVQPGRRLGTEFSDRGKVLGGVGGLFHTDELPKYGITEEEVIKLKEYMNCGENDAVILVADKKNKVERALNAVIERAKESMIGIPEETRKALDDGNTSYLRPLPGAARMYPETDVPTITITEEKLEFVRNNLPEMPEEKLVRFVKEYELNEDLAKQMVMSYHVDLFETLSKKYSKIKPTLIATTLEATIKEIKREGLDTDLLTEEHLEELFNGLSEDKMSKEAVPDVIKGFIENPTKKLDEILEIKGMSSMSVEEVESIIEDIINQNISQVNEKGMGAMGLLMGRCMAQLRGKADGKLINTTLQKKLKEKVQ.

The protein belongs to the GatB/GatE family. GatE subfamily. In terms of assembly, heterodimer of GatD and GatE.

The catalysed reaction is L-glutamyl-tRNA(Gln) + L-glutamine + ATP + H2O = L-glutaminyl-tRNA(Gln) + L-glutamate + ADP + phosphate + H(+). Functionally, allows the formation of correctly charged Gln-tRNA(Gln) through the transamidation of misacylated Glu-tRNA(Gln) in organisms which lack glutaminyl-tRNA synthetase. The reaction takes place in the presence of glutamine and ATP through an activated gamma-phospho-Glu-tRNA(Gln). The GatDE system is specific for glutamate and does not act on aspartate. This chain is Glutamyl-tRNA(Gln) amidotransferase subunit E, found in Methanococcus maripaludis (strain DSM 14266 / JCM 13030 / NBRC 101832 / S2 / LL).